The following is a 207-amino-acid chain: Hydrogenase expression/formation protein HoxM (207 aa).

The Ni(2+) site is built by Glu-19, Asp-65, and His-96.

It belongs to the peptidase A31 family.

Functionally, not known. Could be involved in the processing of hydrogenase. This Azotobacter vinelandii protein is Hydrogenase expression/formation protein HoxM (hoxM).